The chain runs to 115 residues: uncharacterized protein (115 aa).

This is an uncharacterized protein from Human cytomegalovirus (strain AD169) (HHV-5).